Consider the following 158-residue polypeptide: Transcription elongation factor GreA (158 aa).

A coiled-coil region spans residues 47–74; that stretch reads AEYHAAKEEQSHNEGRINELEDKLARAD.

It belongs to the GreA/GreB family.

In terms of biological role, necessary for efficient RNA polymerase transcription elongation past template-encoded arresting sites. The arresting sites in DNA have the property of trapping a certain fraction of elongating RNA polymerases that pass through, resulting in locked ternary complexes. Cleavage of the nascent transcript by cleavage factors such as GreA or GreB allows the resumption of elongation from the new 3'terminus. GreA releases sequences of 2 to 3 nucleotides. This chain is Transcription elongation factor GreA, found in Rhodopseudomonas palustris (strain ATCC BAA-98 / CGA009).